The chain runs to 177 residues: Ubiquinol-cytochrome c reductase iron-sulfur subunit (177 aa).

Residues 18–38 (IVLTASSVAAVGAACAFWPII) form a helical membrane-spanning segment. Residues 88 to 175 (ARAVKMSELI…YIFISDTKIR (88 aa)) form the Rieske domain. Cys-120, His-122, Cys-139, and His-142 together coordinate [2Fe-2S] cluster. The cysteines at positions 125 and 141 are disulfide-linked.

Belongs to the Rieske iron-sulfur protein family. In terms of assembly, the main subunits of complex b-c1 are: cytochrome b, cytochrome c1 and the Rieske protein. Requires [2Fe-2S] cluster as cofactor.

Its subcellular location is the cell membrane. The catalysed reaction is a quinol + 2 Fe(III)-[cytochrome c](out) = a quinone + 2 Fe(II)-[cytochrome c](out) + 2 H(+)(out). Functionally, component of the ubiquinol-cytochrome c reductase complex (complex III or cytochrome b-c1 complex), which is a respiratory chain that generates an electrochemical potential coupled to ATP synthesis. The polypeptide is Ubiquinol-cytochrome c reductase iron-sulfur subunit (petA) (Rickettsia typhi (strain ATCC VR-144 / Wilmington)).